Consider the following 104-residue polypeptide: Large ribosomal subunit protein uL24 (104 aa).

This sequence belongs to the universal ribosomal protein uL24 family. In terms of assembly, part of the 50S ribosomal subunit.

Functionally, one of two assembly initiator proteins, it binds directly to the 5'-end of the 23S rRNA, where it nucleates assembly of the 50S subunit. Its function is as follows. One of the proteins that surrounds the polypeptide exit tunnel on the outside of the subunit. The sequence is that of Large ribosomal subunit protein uL24 from Shewanella sediminis (strain HAW-EB3).